The sequence spans 348 residues: Lysophosphatidic acid receptor 2 (348 aa).

Over 1–30 (MGQCYYNETIGFFYNNSGKELSSHWRPKDV) the chain is Extracellular. N-linked (GlcNAc...) asparagine glycosylation is found at N7 and N15. Residues 31-51 (VVVALGLTVSVLVLLTNLLVI) form a helical membrane-spanning segment. Residues 52–66 (AAIASNRRFHQPIYY) lie on the Cytoplasmic side of the membrane. A helical membrane pass occupies residues 67-87 (LLGNLAAADLFAGVAYLFLMF). At 88–100 (HTGPRTARLSLEG) the chain is on the extracellular side. Residues 101 to 123 (WFLRQGLLDTSLTASVATLLAIA) form a helical membrane-spanning segment. Over 124–143 (VERHRSVMAVQLHSRLPRGR) the chain is Cytoplasmic. A helical membrane pass occupies residues 144–164 (VVMLIVGVWVAALGLGLLPAH). The Extracellular portion of the chain corresponds to 165-185 (SWHCLCALDRCSRMAPLLSRS). A helical membrane pass occupies residues 186-206 (YLAVWALSSLLVFLLMVAVYT). Residues 207 to 239 (RIFFYVRRRVQRMAEHVSCHPRYRETTLSLVKT) lie on the Cytoplasmic side of the membrane. A helical transmembrane segment spans residues 240-260 (VVIILGAFVVCWTPGQVVLLL). Residues 261–276 (DGLGCESCNVLAVEKY) lie on the Extracellular side of the membrane. Residues 277–294 (FLLLAEANSLVNAAVYSC) traverse the membrane as a helical segment. Over 295–348 (RDAEMRRTFRRLLCCACLRQSTRESVHYTSSAQGGASTRIMLPENGHPLMDSTL) the chain is Cytoplasmic. C308 carries S-palmitoyl cysteine lipidation. The PDZ-binding motif lies at 345-348 (DSTL).

It belongs to the G-protein coupled receptor 1 family. Interacts with SLC9A3R2/NHERF2, MAGI3 and PLCB3. Interacts with RALA and GRK2. As to expression, expressed most abundantly in testes and peripheral blood leukocytes with less expression in pancreas, spleen, thymus and prostate. Little or no expression in heart, brain, placenta, lung, liver, skeletal muscle, kidney, ovary, small intestine, or colon.

The protein resides in the cell surface. Its subcellular location is the cell membrane. In terms of biological role, receptor for lysophosphatidic acid (LPA), a mediator of diverse cellular activities. Seems to be coupled to the G(i)/G(o), G(12)/G(13), and G(q) families of heteromeric G proteins. Plays a key role in phospholipase C-beta (PLC-beta) signaling pathway. Stimulates phospholipase C (PLC) activity in a manner that is independent of RALA activation. This chain is Lysophosphatidic acid receptor 2, found in Homo sapiens (Human).